A 109-amino-acid polypeptide reads, in one-letter code: Ribulose bisphosphate carboxylase small subunit (109 aa).

Belongs to the RuBisCO small chain family. Heterohexadecamer of 8 large and 8 small subunits.

The protein resides in the carboxysome. Functionally, ruBisCO catalyzes two reactions: the carboxylation of D-ribulose 1,5-bisphosphate, the primary event in carbon dioxide fixation, as well as the oxidative fragmentation of the pentose substrate in the photorespiration process. Both reactions occur simultaneously and in competition at the same active site. Although the small subunit is not catalytic it is essential for maximal activity. The protein is Ribulose bisphosphate carboxylase small subunit of Prochlorothrix hollandica.